The chain runs to 166 residues: Large ribosomal subunit protein uL10 (166 aa).

Belongs to the universal ribosomal protein uL10 family. As to quaternary structure, part of the ribosomal stalk of the 50S ribosomal subunit. The N-terminus interacts with L11 and the large rRNA to form the base of the stalk. The C-terminus forms an elongated spine to which L12 dimers bind in a sequential fashion forming a multimeric L10(L12)X complex.

Forms part of the ribosomal stalk, playing a central role in the interaction of the ribosome with GTP-bound translation factors. The protein is Large ribosomal subunit protein uL10 of Pseudomonas paraeruginosa (strain DSM 24068 / PA7) (Pseudomonas aeruginosa (strain PA7)).